We begin with the raw amino-acid sequence, 250 residues long: Anti-sigma-L factor RslA (250 aa).

At 1-115 (MTMPLRGLGP…VHRRRRRTRL (115 aa)) the chain is on the cytoplasmic side. Residues 116–136 (ITWVASSAAAAVLAIGVLVGV) traverse the membrane as a helical segment. At 137-250 (QGHSAAPQRA…TGQVLLQRSL (114 aa)) the chain is on the extracellular side.

Interacts with ECF RNA polymerase sigma factor SigL; this should inhibit the interaction of SigL with the RNA polymerase catalytic core. Post-translationally, probably cleaved within the membrane by Rip1 near the cytoplasmic membrane interface.

Its subcellular location is the cell membrane. An anti-sigma factor for extracytoplasmic function (ECF) sigma factor SigL. ECF sigma factors are held in an inactive form by an anti-sigma factor until released by regulated intramembrane proteolysis (RIP). RIP occurs when an extracytoplasmic signal triggers a concerted proteolytic cascade to transmit information and elicit cellular responses. The membrane-spanning regulatory substrate protein is first cut extracytoplasmically (site-1 protease, S1P), then within the membrane itself (site-2 protease, S2P, Rip1), while cytoplasmic proteases finish degrading the regulatory protein, liberating the sigma factor. This Mycobacterium tuberculosis (strain ATCC 35801 / TMC 107 / Erdman) protein is Anti-sigma-L factor RslA (rslA).